The following is a 430-amino-acid chain: Adenylosuccinate synthetase (430 aa).

GTP-binding positions include 12–18 (GDEGKGK) and 40–42 (GHT). The active-site Proton acceptor is D13. Positions 13 and 40 each coordinate Mg(2+). IMP-binding positions include 13–16 (DEGK), 38–41 (NAGH), T128, R142, Q223, T238, and R302. The active-site Proton donor is the H41. 298–304 (TTTGRPR) contacts substrate. GTP contacts are provided by residues R304, 330 to 332 (SID), and 412 to 414 (SVG).

Belongs to the adenylosuccinate synthetase family. As to quaternary structure, homodimer. It depends on Mg(2+) as a cofactor.

It localises to the cytoplasm. The enzyme catalyses IMP + L-aspartate + GTP = N(6)-(1,2-dicarboxyethyl)-AMP + GDP + phosphate + 2 H(+). The protein operates within purine metabolism; AMP biosynthesis via de novo pathway; AMP from IMP: step 1/2. Plays an important role in the de novo pathway of purine nucleotide biosynthesis. Catalyzes the first committed step in the biosynthesis of AMP from IMP. The sequence is that of Adenylosuccinate synthetase from Streptococcus pyogenes serotype M1.